The following is a 243-amino-acid chain: Orotidine 5'-phosphate decarboxylase (243 aa).

Residues aspartate 19, lysine 41, aspartate 69–threonine 78, threonine 124, arginine 185, glutamine 194, glycine 214, and arginine 215 each bind substrate. Residue lysine 71 is the Proton donor of the active site.

Belongs to the OMP decarboxylase family. Type 1 subfamily. As to quaternary structure, homodimer.

The catalysed reaction is orotidine 5'-phosphate + H(+) = UMP + CO2. It participates in pyrimidine metabolism; UMP biosynthesis via de novo pathway; UMP from orotate: step 2/2. Catalyzes the decarboxylation of orotidine 5'-monophosphate (OMP) to uridine 5'-monophosphate (UMP). The chain is Orotidine 5'-phosphate decarboxylase from Xanthomonas euvesicatoria pv. vesicatoria (strain 85-10) (Xanthomonas campestris pv. vesicatoria).